The following is a 378-amino-acid chain: Copper-containing nitrite reductase (378 aa).

Residues 1–38 (MTEQLQMTRRTMLAGAALAGAVAPLLHTAQAHAAGAAA) constitute a signal peptide (tat-type signal). 2 consecutive Plastocyanin-like domains span residues 39–213 (AAGA…YDKI) and 214–378 (YYVG…PASM). Cu cation contacts are provided by H133, H138, H173, C174, H183, M188, and H344.

The protein belongs to the multicopper oxidase family. As to quaternary structure, homotrimer. Cu(+) is required as a cofactor. Requires Cu(2+) as cofactor. FAD serves as cofactor. In terms of processing, predicted to be exported by the Tat system. The position of the signal peptide cleavage has been experimentally proven.

The protein resides in the periplasm. It carries out the reaction nitric oxide + Fe(III)-[cytochrome c] + H2O = Fe(II)-[cytochrome c] + nitrite + 2 H(+). The protein operates within nitrogen metabolism; nitrate reduction (denitrification); dinitrogen from nitrate: step 2/4. This is Copper-containing nitrite reductase (nirK) from Achromobacter cycloclastes.